A 712-amino-acid chain; its full sequence is Methionine--tRNA ligase (712 aa).

Positions 20–30 match the 'HIGH' region motif; the sequence is PYANGKAHIGH. 4 residues coordinate Zn(2+): cysteine 151, cysteine 154, cysteine 163, and cysteine 167. The short motif at 334-338 is the 'KMSKS' region element; that stretch reads KFSKT. ATP is bound at residue lysine 337. The disordered stretch occupies residues 559–585; sequence ANAKKSAAKGGEKEPSKSEGMGPSEEA. One can recognise a tRNA-binding domain in the interval 610 to 712; that stretch reads DFAKLDIRVG…KEIKPGSRIR (103 aa).

This sequence belongs to the class-I aminoacyl-tRNA synthetase family. MetG type 1 subfamily. Homodimer. The cofactor is Zn(2+).

It is found in the cytoplasm. The enzyme catalyses tRNA(Met) + L-methionine + ATP = L-methionyl-tRNA(Met) + AMP + diphosphate. Its function is as follows. Is required not only for elongation of protein synthesis but also for the initiation of all mRNA translation through initiator tRNA(fMet) aminoacylation. The protein is Methionine--tRNA ligase of Methanosarcina acetivorans (strain ATCC 35395 / DSM 2834 / JCM 12185 / C2A).